The sequence spans 402 residues: Phosphoglycerate kinase (402 aa).

Substrate-binding positions include 21 to 23 (DFN), arginine 36, 59 to 62 (HLGR), arginine 118, and arginine 151. Residues lysine 201, glycine 293, glutamate 324, and 353–356 (GGDS) contribute to the ATP site.

It belongs to the phosphoglycerate kinase family. As to quaternary structure, monomer.

It is found in the cytoplasm. The enzyme catalyses (2R)-3-phosphoglycerate + ATP = (2R)-3-phospho-glyceroyl phosphate + ADP. It participates in carbohydrate degradation; glycolysis; pyruvate from D-glyceraldehyde 3-phosphate: step 2/5. The sequence is that of Phosphoglycerate kinase from Thermosipho africanus (strain TCF52B).